A 388-amino-acid chain; its full sequence is Transcriptional regulatory protein EmbR (388 aa).

A DNA-binding region (ompR/PhoB-type) is located at residues 2–105 (AGSATVEKRL…AAPPGYRLSI (104 aa)). Residues 308 to 357 (TRIGRLHDNDIVLDSANVSRHHAVIVDTGTNYVINDLRSSNGVHVQHERI) form the FHA domain.

It belongs to the AfsR/DnrI/RedD regulatory family. Phosphorylated on threonine residue(s).

In terms of biological role, positively regulates the transcription of the embCAB operon. Exhibits ATPase and GTPase activities. This is Transcriptional regulatory protein EmbR (embR) from Mycobacterium bovis (strain ATCC BAA-935 / AF2122/97).